The primary structure comprises 88 residues: MSIQKSTNSSSLAEVIDRILDKGIVIDAFARVSVVGIEILTIEARVVIASVDTWLRYAEAVGLLRDDVEENGLPERSNSSEGQPRFSI.

The protein belongs to the gas vesicle GvpA family. In terms of assembly, the gas vesicle shell is 2 nm thick and consists of a single layer of this protein. It forms helical ribs nearly perpendicular to the long axis of the vesicle.

It is found in the gas vesicle shell. Its function is as follows. Gas vesicles are hollow, gas filled proteinaceous nanostructures found in some microorganisms. During planktonic growth they allow positioning of the organism at a favorable depth for light or nutrient acquisition. GvpA forms the protein shell. It is not clear if the 2 type A proteins in this organism are functionally redundant. Functionally, when a minimal gvp locus (gvpA2-gvpR-gvpN-gvpF-gvpG-gvpL-gvpS-gvpK-gvpJ-gvpT-gvpU, called pNL29) is expressed in E.coli gas vesicles are made. The polypeptide is Gas vesicle protein A2 (Priestia megaterium (Bacillus megaterium)).